The chain runs to 641 residues: MDTTLQDPLVGQVLDGRYRVDARIAVGGMATVYRAVDTRLDRVLALKVMHPSLAADASFVERFIREAKSVARLAHPNVVQVFDQGTDGAYVYLAMEYIAGCTLRDVLRERGALQPRAALDILEPVLAALGAAHRAGFVHRDMKPENVLIGDDGRVKVADFGLVRAVDSVTNTTGTVLGTVSYLAPEQIEHGTADPRVDVYACGILLYEMLTGEKPHDGDSPAIVLYKHLHDDVPPPSAAVPGMAYELDELVASATARGPEVRPHDAVALLARARDARARLGDEQLDAVPPQALASEHDNADDRTSVIPRALTVRRPLPVNEEDEGADAAHRTSRFRSPPPLPPRGRTALRRGPMAIVIGVLLVLGLGAGVWYINSGQFTKVPPLLAKTEKEARDRLADAGLDAGQVSEAYSDTVERGSVATDPEAGARIRTNDSVSLTLSKGPRTVRVPDLDGYPQDKARSLLEDEGLKPGMSTREFSDSVPAGSVISTEPGKGTEVRAGSAVALTVSKGAPVDVPDVAGDDLEDARAELEEAGLEVKVATERVTSEYDAGRVARQDPGPGGRVAEGDTVTLTLSKGPEMAEVPDVVGDSVGEAREKLEGAGFRVDEDRGLLGLFGDTVKGQSVDGGDSAPKGSTITIEIR.

One can recognise a Protein kinase domain in the interval 18–280 (YRVDARIAVG…ARARDARARL (263 aa)). ATP contacts are provided by residues 24 to 32 (IAVGGMATV) and Lys-47. Asp-141 serves as the catalytic Proton acceptor. Positions 317–347 (LPVNEEDEGADAAHRTSRFRSPPPLPPRGRT) are disordered. 4 consecutive PASTA domains span residues 375-441 (SGQF…TLSK), 442-508 (GPRT…LTVS), 509-576 (KGAP…TLSK), and 577-641 (GPEM…IEIR). A disordered region spans residues 469-494 (KPGMSTREFSDSVPAGSVISTEPGKG).

This sequence belongs to the protein kinase superfamily. Ser/Thr protein kinase family. In terms of processing, autophosphorylated on threonine residue(s).

It carries out the reaction L-seryl-[protein] + ATP = O-phospho-L-seryl-[protein] + ADP + H(+). The catalysed reaction is L-threonyl-[protein] + ATP = O-phospho-L-threonyl-[protein] + ADP + H(+). This Streptomyces toyocaensis protein is Serine/threonine-protein kinase PK-1 (spk1).